Reading from the N-terminus, the 154-residue chain is Phosphopantetheine adenylyltransferase (154 aa).

Residue Thr10 participates in substrate binding. ATP contacts are provided by residues 10 to 11 (TF) and His18. Substrate is bound by residues Lys42, Leu74, and Arg88. ATP-binding positions include 89–91 (GLR), Glu99, and 124–130 (NAFISSS).

Belongs to the bacterial CoaD family. Homohexamer. Mg(2+) is required as a cofactor.

The protein resides in the cytoplasm. It carries out the reaction (R)-4'-phosphopantetheine + ATP + H(+) = 3'-dephospho-CoA + diphosphate. It participates in cofactor biosynthesis; coenzyme A biosynthesis; CoA from (R)-pantothenate: step 4/5. Reversibly transfers an adenylyl group from ATP to 4'-phosphopantetheine, yielding dephospho-CoA (dPCoA) and pyrophosphate. This Nautilia profundicola (strain ATCC BAA-1463 / DSM 18972 / AmH) protein is Phosphopantetheine adenylyltransferase.